Reading from the N-terminus, the 125-residue chain is Glycine cleavage system H protein (125 aa).

In terms of domain architecture, Lipoyl-binding spans 22-103; sequence VFVVGITENA…AFTAWIFKIK (82 aa). Lysine 63 is modified (N6-lipoyllysine).

The protein belongs to the GcvH family. The glycine cleavage system is composed of four proteins: P, T, L and H. (R)-lipoate serves as cofactor.

Its function is as follows. The glycine cleavage system catalyzes the degradation of glycine. The H protein shuttles the methylamine group of glycine from the P protein to the T protein. The chain is Glycine cleavage system H protein from Bordetella avium (strain 197N).